Consider the following 110-residue polypeptide: Thioredoxin (110 aa).

The Thioredoxin domain maps to 2-110; the sequence is SALLVEIDKD…IDAMIAKHVG (109 aa). A disulfide bond links Cys33 and Cys36.

Belongs to the thioredoxin family.

In terms of biological role, participates in various redox reactions through the reversible oxidation of its active center dithiol to a disulfide and catalyzes dithiol-disulfide exchange reactions. The chain is Thioredoxin (trxA) from Peptoclostridium acidaminophilum (Eubacterium acidaminophilum).